A 316-amino-acid polypeptide reads, in one-letter code: FAD:protein FMN transferase (316 aa).

FAD-binding positions include Met-14, 88 to 90 (AFN), and Asp-146. Mg(2+) is bound at residue Ala-149. FAD contacts are provided by Lys-152 and Leu-231. Residues Asp-257 and Thr-261 each contribute to the Mg(2+) site.

The protein belongs to the ApbE family. Mg(2+) is required as a cofactor.

It localises to the cytoplasm. The catalysed reaction is L-threonyl-[protein] + FAD = FMN-L-threonyl-[protein] + AMP + H(+). Functionally, flavin transferase that catalyzes the transfer of the FMN moiety of FAD and its covalent binding to the hydroxyl group of a threonine residue in a target flavoprotein. Is responsible for the modification of the fumarate reductase KPK_2907. The chain is FAD:protein FMN transferase from Klebsiella pneumoniae (strain 342).